The primary structure comprises 235 residues: Phosphoribosylaminoimidazole-succinocarboxamide synthase (235 aa).

It belongs to the SAICAR synthetase family.

It catalyses the reaction 5-amino-1-(5-phospho-D-ribosyl)imidazole-4-carboxylate + L-aspartate + ATP = (2S)-2-[5-amino-1-(5-phospho-beta-D-ribosyl)imidazole-4-carboxamido]succinate + ADP + phosphate + 2 H(+). The protein operates within purine metabolism; IMP biosynthesis via de novo pathway; 5-amino-1-(5-phospho-D-ribosyl)imidazole-4-carboxamide from 5-amino-1-(5-phospho-D-ribosyl)imidazole-4-carboxylate: step 1/2. This Clostridium novyi (strain NT) protein is Phosphoribosylaminoimidazole-succinocarboxamide synthase.